We begin with the raw amino-acid sequence, 712 residues long: Aryl hydrocarbon receptor nuclear translocator 2 (712 aa).

2 disordered regions span residues 1 to 20 (MATP…PGSV) and 35 to 74 (MAGA…IERR). Residue arginine 42 is modified to Omega-N-methylarginine. Residues 63–73 (FSRENHSEIER) are compositionally biased toward basic and acidic residues. The 54-residue stretch at 63 to 116 (FSRENHSEIERRRRNKMTQYITELSDMVPTCSALARKPDKLTILRMAVSHMKSM) folds into the bHLH domain. PAS domains are found at residues 134-209 (TEQE…MTGR) and 323-393 (PVCM…VKLK). The region spanning 398–441 (SVMYRFRTKNREWLLIRTSSFTFQNPYSDEIEYVICTNTNVKQL) is the PAC domain. Positions 573–712 (AWTGSRPPFP…DLGMFPPFSE (140 aa)) are disordered. Low complexity-rich tracts occupy residues 597-626 (SSHP…AYPS) and 653-675 (SQWQ…QPGQ).

Efficient DNA binding requires dimerization with another bHLH protein. Heterodimer with NPAS4 or SIM1. Heterodimer with the aryl hydrocarbon receptor (AHR) or the SIM1 protein. Interacts with TACC3.

Its subcellular location is the nucleus. Its function is as follows. Transcription factor that plays a role in the development of the hypothalamo-pituitary axis, postnatal brain growth, and visual and renal function. Specifically recognizes the xenobiotic response element (XRE). This Rattus norvegicus (Rat) protein is Aryl hydrocarbon receptor nuclear translocator 2 (Arnt2).